The chain runs to 155 residues: U4/U6.U5 small nuclear ribonucleoprotein 27 kDa protein (155 aa).

2 stretches are compositionally biased toward basic residues: residues 1–31 and 39–59; these read MGRSRSRSPRRERRRSRSTSRERERRRRERS and RRSRSRSPHRRRSRSPRRHRS. Residues 1–97 are disordered; sequence MGRSRSRSPR…ITEEDLEGKT (97 aa). 2 positions are modified to phosphoserine: serine 61 and serine 65. Basic and acidic residues predominate over residues 66-97; sequence RLKERRDEEKKETKETKSKERQITEEDLEGKT. A phosphoserine mark is found at serine 111, serine 114, and serine 132.

This sequence belongs to the SNUT3 family. As to quaternary structure, part of a tri-snRNP complex. In terms of processing, phosphorylated in vitro by snRNP-associated protein kinase.

It localises to the nucleus. Functionally, may play a role in mRNA splicing. This is U4/U6.U5 small nuclear ribonucleoprotein 27 kDa protein (SNRNP27) from Homo sapiens (Human).